The primary structure comprises 509 residues: Lanosterol 14-alpha demethylase (509 aa).

Residues Gly30–Phe50 traverse the membrane as a helical segment. Cys455 is a heme binding site.

The protein belongs to the cytochrome P450 family. It depends on heme as a cofactor. Ubiquitinated by MARCHF6, leading to proteasomal degradation.

The protein localises to the endoplasmic reticulum membrane. The protein resides in the microsome membrane. It catalyses the reaction a 14alpha-methyl steroid + 3 reduced [NADPH--hemoprotein reductase] + 3 O2 = a Delta(14) steroid + formate + 3 oxidized [NADPH--hemoprotein reductase] + 4 H2O + 4 H(+). It carries out the reaction lanosterol + 3 reduced [NADPH--hemoprotein reductase] + 3 O2 = 4,4-dimethyl-5alpha-cholesta-8,14,24-trien-3beta-ol + formate + 3 oxidized [NADPH--hemoprotein reductase] + 4 H2O + 4 H(+). The enzyme catalyses 24,25-dihydrolanosterol + 3 reduced [NADPH--hemoprotein reductase] + 3 O2 = 4,4-dimethyl-8,14-cholestadien-3beta-ol + formate + 3 oxidized [NADPH--hemoprotein reductase] + 4 H2O + 4 H(+). The catalysed reaction is a 14alpha-methyl steroid + reduced [NADPH--hemoprotein reductase] + O2 = a 14alpha-hydroxymethyl steroid + oxidized [NADPH--hemoprotein reductase] + H2O + H(+). It catalyses the reaction a 14alpha-hydroxymethyl steroid + reduced [NADPH--hemoprotein reductase] + O2 = a 14alpha-formyl steroid + oxidized [NADPH--hemoprotein reductase] + 2 H2O + H(+). It carries out the reaction a 14alpha-formyl steroid + reduced [NADPH--hemoprotein reductase] + O2 = a Delta(14) steroid + formate + oxidized [NADPH--hemoprotein reductase] + H2O + 2 H(+). The enzyme catalyses lanosterol + reduced [NADPH--hemoprotein reductase] + O2 = 32-hydroxylanosterol + oxidized [NADPH--hemoprotein reductase] + H2O + H(+). The catalysed reaction is 32-hydroxylanosterol + reduced [NADPH--hemoprotein reductase] + O2 = 32-oxolanosterol + oxidized [NADPH--hemoprotein reductase] + 2 H2O + H(+). It catalyses the reaction 32-oxolanosterol + reduced [NADPH--hemoprotein reductase] + O2 = 4,4-dimethyl-5alpha-cholesta-8,14,24-trien-3beta-ol + formate + oxidized [NADPH--hemoprotein reductase] + H2O + 2 H(+). It carries out the reaction 24,25-dihydrolanosterol + reduced [NADPH--hemoprotein reductase] + O2 = 32-hydroxy-24,25-dihydrolanosterol + oxidized [NADPH--hemoprotein reductase] + H2O + H(+). The enzyme catalyses 32-hydroxy-24,25-dihydrolanosterol + reduced [NADPH--hemoprotein reductase] + O2 = 32-oxo-24,25-dihydrolanosterol + oxidized [NADPH--hemoprotein reductase] + 2 H2O + H(+). The catalysed reaction is 32-oxo-24,25-dihydrolanosterol + reduced [NADPH--hemoprotein reductase] + O2 = 4,4-dimethyl-8,14-cholestadien-3beta-ol + formate + oxidized [NADPH--hemoprotein reductase] + H2O + 2 H(+). It participates in steroid biosynthesis; zymosterol biosynthesis; zymosterol from lanosterol: step 1/6. Its activity is regulated as follows. Inhibited by azalanstat. Inhibited by azole antifungal agents ketoconazole, itraconazole and fluconazole. In terms of biological role, sterol 14alpha-demethylase that plays a critical role in the cholesterol biosynthesis pathway, being cholesterol the major sterol component in mammalian membranes as well as a precursor for bile acid and steroid hormone synthesis. Cytochrome P450 monooxygenase that catalyzes the three-step oxidative removal of the 14alpha-methyl group (C-32) of sterols such as lanosterol (lanosta-8,24-dien-3beta-ol) and 24,25-dihydrolanosterol (DHL) in the form of formate, and converts the sterols to 4,4-dimethyl-5alpha-cholesta-8,14,24-trien-3beta-ol and 4,4-dimethyl-8,14-cholestadien-3beta-ol, respectively, which are intermediates of cholesterol biosynthesis. Can also demethylate substrates not intrinsic to mammals, such as eburicol (24-methylene-24,25-dihydrolanosterol), but at a lower rate than DHL. In Pongo abelii (Sumatran orangutan), this protein is Lanosterol 14-alpha demethylase.